Here is a 586-residue protein sequence, read N- to C-terminus: Homothallic switching endonuclease (586 aa).

The 156-residue stretch at 215-370 (MLGLWLGDST…IVHISRSLGM (156 aa)) folds into the DOD-type homing endonuclease domain.

Rapidly degraded via the ubiquitin-26S proteasome system through two ubiquitin-conjugating enzymes UBC2/RAD6 and UBC3/CDC34.

The protein resides in the nucleus. Its function is as follows. Initiation of mating type interconversion. This protein is a site-specific endonuclease that cleaves a site in the mat locus on chromosome III. The double-strand break is followed by a unidirectional gene conversion event that replaces the information at the mat locus by information copied from either of the two homologous loci (HMR and HML) that reside at the extremity of the chromosome III. Endonuclease expression takes place in late G1 just before cells enter S phase. The polypeptide is Homothallic switching endonuclease (HO) (Saccharomyces cerevisiae (strain ATCC 204508 / S288c) (Baker's yeast)).